Consider the following 618-residue polypeptide: MRSRILAIVFAARHVAALPLAAEDAAATLSLTSSASSTTVLPSPTQYTLPNNDPNQGARNASIARKRELFLYGPSTLGQTTFYPTGELGNNISARDVLLWRQDAANQTATAYREANETFADITSRGGFKTLDDFALLYNGHWKESVPEGISKGMLSNCTSDLLFSMERLSSNPYVLKRLHPTKDKLPFSVESKVVKKLTATTLEALHKGGRLFLVDHSYQKKYTPQPGRYAAACQGLFYLDARSNQFLPLAIKTNVGVDLTYTPLDDKDDWLLAKIMFNNNDLFYSQMYHVLFHTIPEIVHEAAFRTLSDRHPVMGVLNRLMYQAYAIRPVGGAVLFNPGGFWDQNFGLPASAAIDFPGSVYAQGGGGFQAGYLEKDLRSRGLIGEDSGPRLPHFPFYEDAHRLIGAIRRFMQAFVDSTYGADDGDDGALLRDYELQNWIAEANGPAQVRDFPAAPLRRRAQLVDVLTHVAWITGGAHHVMNQGSPVKFSGVLPLHPAALYAPIPTAKGATGNGTRAGLLAWLPNERQAVEQVSLLARFNRAQVGDRKQTVRDAFAAPDLLAGNGPGYAAANARFVEDTGRISREIAGRGFDGKGLSQGMPFVWTALNPAVNPFFLSV.

The first 16 residues, Met-1–Ala-16, serve as a signal peptide directing secretion. Low complexity predominate over residues Ser-36–Thr-45. The segment at Ser-36 to Ala-58 is disordered. Residues Gln-46 to Ala-58 show a composition bias toward polar residues. In terms of domain architecture, Lipoxygenase spans Tyr-47–Val-618. 5 N-linked (GlcNAc...) asparagine glycosylation sites follow: Asn-60, Asn-91, Asn-106, Asn-116, and Asn-157. Positions 290, 294, 478, and 482 each coordinate Mn(2+). A glycan (N-linked (GlcNAc...) asparagine) is linked at Asn-513. Val-618 contacts Mn(2+).

The protein belongs to the lipoxygenase family. Manganese lipoxygenase subfamily. The cofactor is Mn(2+). In terms of processing, N- and O-glycosylated.

It localises to the secreted. The catalysed reaction is (9Z,12Z)-octadecadienoate + O2 = (11S)-hydroperoxy-(9Z,12Z)-octadecadienoate. The enzyme catalyses (9Z,12Z)-octadecadienoate + O2 = (13R)-hydroperoxy-(9Z,11E)-octadecadienoate. It catalyses the reaction (9Z,12Z,15Z)-octadecatrienoate + O2 = (11S)-hydroperoxy-(9Z,12Z,15Z)-octadecatrienoate. It carries out the reaction (9Z,12Z,15Z)-octadecatrienoate + O2 = (13R)-hydroperoxy-(9Z,11E,15Z)-octadecatrienoate. Lipoxygenase that metabolizes linoleic and alpha-linolenic acids to 11S- and 13R-hydroperoxy fatty acids. At the end of lipoxygenation, the intermediate product 11S-HPODE from linoleic acid is then transformed into 13R-HPODE as the final product. It also acts on alpha-linolenic acid producing 11S-HPOTrE and 13R-HPOTrE with subsequent transformation of 11S-HPOTrE to 13R-HPOTrE as final product. In Gaeumannomyces avenae (Oat take-all root rot fungus), this protein is Manganese lipoxygenase.